The sequence spans 199 residues: Recombination protein RecR (199 aa).

The C4-type zinc finger occupies 56-71 (CSICFNWSAEDPCEIC). The Toprim domain occupies 79-174 (SLWCVVADVK…TLRMTRLAFG (96 aa)).

This sequence belongs to the RecR family.

Its function is as follows. May play a role in DNA repair. It seems to be involved in an RecBC-independent recombinational process of DNA repair. It may act with RecF and RecO. The chain is Recombination protein RecR from Synechococcus sp. (strain JA-2-3B'a(2-13)) (Cyanobacteria bacterium Yellowstone B-Prime).